The following is a 338-amino-acid chain: mRNA decay activator protein ZFP36L1 (338 aa).

Residues 1–111 (MTTTLVSATI…QKQPGSGQVN (111 aa)) form a necessary and sufficient for the association with mRNA decay enzymes and mRNA decay activation region. Residue Ser-54 is modified to Phosphoserine; by MAPKAPK2. The disordered stretch occupies residues 71–113 (LKGEPAPSLSSRDSRFRDRSFSEGGERLLPTQKQPGSGQVNSS). Positions 82–96 (RDSRFRDRSFSEGGE) are enriched in basic and acidic residues. A Phosphoserine; by PKB/AKT1 modification is found at Ser-90. Ser-92 bears the Phosphoserine; by PKB/AKT1 and MAPKAPK2 mark. A compositionally biased stretch (polar residues) spans 101 to 113 (TQKQPGSGQVNSS). 2 C3H1-type zinc fingers span residues 114 to 142 (RYKTELCRPFEENGACKYGDKCQFAHGIH) and 152 to 180 (KYKTELCRTFHTIGFCPYGPRCHFIHNAE). Positions 185-338 (LAGGRDLSAD…IFSRLSISDD (154 aa)) are necessary for mRNA decay activation. Position 203 is a phosphoserine; by PKB/AKT1 and MAPKAPK2 (Ser-203). The segment at 273 to 338 (SPTTFLFRPM…IFSRLSISDD (66 aa)) is disordered. The segment covering 305–318 (YLSSSSSSHSGSDS) has biased composition (low complexity). Ser-318 is modified (phosphoserine). Phosphoserine; by RPS6KA1 is present on Ser-334.

Associates with the cytoplasmic CCR4-NOT deadenylase and RNA exosome complexes to trigger ARE-containing mRNA deadenylation and decay processes. Interacts with CNOT1. Interacts (via N-terminus) with CNOT6. Interacts with CNOT7; this interaction is inhibited in response to phorbol 12-myristate 13-acetate (PMA) treatment in a p38 MAPK-dependent manner. Interacts with DCP1A. Interacts (via N-terminus) with DCP2. Interacts (via N-terminus) with EXOSC2. Interacts with XRN1. Interacts (via phosphorylated form) with YWHAB; this interaction occurs in a protein kinase AKT1-dependent manner. Interacts (via phosphorylated form) with YWHAZ; this interaction occurs in a p38 MAPK- and AKT-signaling pathways. Phosphorylated. Phosphorylated by RPS6KA1 at Ser-334 upon phorbol 12-myristate 13-acetate (PMA) treatment; this phosphorylation results in dissociation of the CCR4-NOT deadenylase complex and induces p38 MAPK-mediated stabilization of the low-density lipoprotein receptor LDLR mRNA. Phosphorylated by protein kinase AKT1 at Ser-92 and Ser-203 in response to insulin; these phosphorylations stabilize ZFP36L1, increase the association with 14-3-3 proteins and mediate ARE-containing mRNA stabilization. AKT1-mediated phosphorylation at Ser-92 does not impair ARE-containing RNA-binding. Phosphorylated at Ser-54, Ser-92 and Ser-203 by MAPKAPK2; these phosphorylations increase the association with 14-3-3 proteins and mediate ARE-containing mRNA stabilization in a protein kinase AKT1-independent manner. MAPKAPK2-mediated phosphorylations at Ser-54, Ser-92 and Ser-203 do not impair ARE-containing RNA-binding. Phosphorylations increase the association with 14-3-3 proteins and mediate ARE-containing mRNA stabilization during early adipogenesis in a p38 MAPK- and AKT-dependent manner. In terms of processing, ubiquitinated. Ubiquitination leads to proteasomal degradation, a process inhibited by phosphorylations at Ser-90, Ser-92 and Ser-203. In terms of tissue distribution, expressed in preadipocytes and adipocytes. Expressed in the proximal and distal tubules in the renal cortex (at protein level). Expressed in ovary, heart, kidney, lung, spleen and thymus. Weakly expressed in brain, liver and testis. Expressed in osteoblasts. Expressed in embryonic stem cells (ESCs). Expressed through B lymphocyte development.

Its subcellular location is the nucleus. It localises to the cytoplasm. The protein localises to the cytoplasmic granule. It is found in the P-body. In terms of biological role, zinc-finger RNA-binding protein that destabilizes several cytoplasmic AU-rich element (ARE)-containing mRNA transcripts by promoting their poly(A) tail removal or deadenylation, and hence provide a mechanism for attenuating protein synthesis. Acts as a 3'-untranslated region (UTR) ARE mRNA-binding adapter protein to communicate signaling events to the mRNA decay machinery. Functions by recruiting the CCR4-NOT deadenylating complex and components of the cytoplasmic RNA decay machinery to the bound ARE-containing mRNAs, and hence promotes ARE-mediated mRNA deadenylation and decay processes. Also induces the degradation of ARE-containing mRNAs even in absence of poly(A) tail. Binds to 3'-UTR ARE of numerous mRNAs. Positively regulates early adipogenesis by promoting ARE-mediated mRNA decay of immediate early genes (IEGs). Promotes ARE-mediated mRNA decay of mineralocorticoid receptor NR3C2 mRNA in response to hypertonic stress. Negatively regulates hematopoietic/erythroid cell differentiation by promoting ARE-mediated mRNA decay of the transcription factor STAT5B mRNA. Positively regulates monocyte/macrophage cell differentiation by promoting ARE-mediated mRNA decay of the cyclin-dependent kinase CDK6 mRNA. Promotes degradation of ARE-containing pluripotency-associated mRNAs in embryonic stem cells (ESCs), such as NANOG, through a fibroblast growth factor (FGF)-induced MAPK-dependent signaling pathway, and hence attenuates ESC self-renewal and positively regulates mesendoderm differentiation. May play a role in mediating pro-apoptotic effects in malignant B-cells by promoting ARE-mediated mRNA decay of BCL2 mRNA. In association with ZFP36L2 maintains quiescence on developing B lymphocytes by promoting ARE-mediated decay of several mRNAs encoding cell cycle regulators that help B cells progress through the cell cycle, and hence ensuring accurate variable-diversity-joining (VDJ) recombination and functional immune cell formation. Together with ZFP36L2 is also necessary for thymocyte development and prevention of T-cell acute lymphoblastic leukemia (T-ALL) transformation by promoting ARE-mediated mRNA decay of the oncogenic transcription factor NOTCH1 mRNA. Involved in the delivery of target ARE-mRNAs to processing bodies (PBs). In addition to its cytosolic mRNA-decay function, plays a role in the regulation of nuclear mRNA 3'-end processing; modulates mRNA 3'-end maturation efficiency of the DLL4 mRNA through binding with an ARE embedded in a weak noncanonical polyadenylation (poly(A)) signal in endothelial cells. Also involved in the regulation of stress granule (SG) and P-body (PB) formation and fusion. Plays a role in vasculogenesis and endocardial development. Involved in the regulation of keratinocyte proliferation, differentiation and apoptosis. Plays a role in myoblast cell differentiation. In Mus musculus (Mouse), this protein is mRNA decay activator protein ZFP36L1.